We begin with the raw amino-acid sequence, 66 residues long: Probable Sec-independent protein translocase protein TatE (66 aa).

Residues 1–21 (MEGISITKLLVIAVLIVLLFG) traverse the membrane as a helical segment. The tract at residues 46-66 (ETPAAKKSDGVEAAPRVENKE) is disordered.

The protein belongs to the TatA/E family. TatE subfamily.

It localises to the cell inner membrane. Part of the twin-arginine translocation (Tat) system that transports large folded proteins containing a characteristic twin-arginine motif in their signal peptide across membranes. TatE shares overlapping functions with TatA. The sequence is that of Probable Sec-independent protein translocase protein TatE from Edwardsiella ictaluri (strain 93-146).